Here is a 357-residue protein sequence, read N- to C-terminus: tRNA N6-adenosine threonylcarbamoyltransferase (357 aa).

Residues histidine 120 and histidine 124 each contribute to the Fe cation site. Substrate-binding positions include leucine 143–glycine 147, aspartate 176, glycine 189, and asparagine 289. Aspartate 317 serves as a coordination point for Fe cation.

Belongs to the KAE1 / TsaD family. Requires Fe(2+) as cofactor.

The protein localises to the cytoplasm. It catalyses the reaction L-threonylcarbamoyladenylate + adenosine(37) in tRNA = N(6)-L-threonylcarbamoyladenosine(37) in tRNA + AMP + H(+). Its function is as follows. Required for the formation of a threonylcarbamoyl group on adenosine at position 37 (t(6)A37) in tRNAs that read codons beginning with adenine. Is involved in the transfer of the threonylcarbamoyl moiety of threonylcarbamoyl-AMP (TC-AMP) to the N6 group of A37, together with TsaE and TsaB. TsaD likely plays a direct catalytic role in this reaction. This is tRNA N6-adenosine threonylcarbamoyltransferase from Polynucleobacter asymbioticus (strain DSM 18221 / CIP 109841 / QLW-P1DMWA-1) (Polynucleobacter necessarius subsp. asymbioticus).